A 433-amino-acid chain; its full sequence is 3-phosphoshikimate 1-carboxyvinyltransferase (433 aa).

Lys23, Ser24, and Arg28 together coordinate 3-phosphoshikimate. Lys23 contributes to the phosphoenolpyruvate binding site. The phosphoenolpyruvate site is built by Gly95 and Arg123. 6 residues coordinate 3-phosphoshikimate: Ser170, Ser171, Gln172, Ser198, Asp317, and Lys344. Position 172 (Gln172) interacts with phosphoenolpyruvate. Catalysis depends on Asp317, which acts as the Proton acceptor. Positions 348, 391, and 416 each coordinate phosphoenolpyruvate.

Belongs to the EPSP synthase family. Monomer.

It localises to the cytoplasm. It carries out the reaction 3-phosphoshikimate + phosphoenolpyruvate = 5-O-(1-carboxyvinyl)-3-phosphoshikimate + phosphate. Its pathway is metabolic intermediate biosynthesis; chorismate biosynthesis; chorismate from D-erythrose 4-phosphate and phosphoenolpyruvate: step 6/7. Catalyzes the transfer of the enolpyruvyl moiety of phosphoenolpyruvate (PEP) to the 5-hydroxyl of shikimate-3-phosphate (S3P) to produce enolpyruvyl shikimate-3-phosphate and inorganic phosphate. This is 3-phosphoshikimate 1-carboxyvinyltransferase from Neisseria meningitidis serogroup C / serotype 2a (strain ATCC 700532 / DSM 15464 / FAM18).